Reading from the N-terminus, the 320-residue chain is Ribosomal large subunit pseudouridine synthase C (320 aa).

One can recognise an S4 RNA-binding domain in the interval 20–83; the sequence is QRIDNFLLAK…AEREEVQVSA (64 aa). Asp144 is a catalytic residue.

The protein belongs to the pseudouridine synthase RluA family.

The enzyme catalyses uridine(955/2504/2580) in 23S rRNA = pseudouridine(955/2504/2580) in 23S rRNA. Its function is as follows. Responsible for synthesis of pseudouridine from uracil at positions 955, 2504 and 2580 in 23S ribosomal RNA. This is Ribosomal large subunit pseudouridine synthase C (rluC) from Yersinia pestis.